A 234-amino-acid chain; its full sequence is UPF0173 metal-dependent hydrolase Meso_1362 (234 aa).

The protein belongs to the UPF0173 family.

The protein is UPF0173 metal-dependent hydrolase Meso_1362 of Chelativorans sp. (strain BNC1).